Here is a 452-residue protein sequence, read N- to C-terminus: Adenylosuccinate synthetase isozyme 1 (452 aa).

Residues 1–22 (MSGTRASNDRSSHPGGHKRPRY) form a disordered region. GTP is bound by residues 37 to 43 (GDEGKGK) and 65 to 67 (GHT). Catalysis depends on Asp38, which acts as the Proton acceptor. 2 residues coordinate Mg(2+): Asp38 and Gly65. A substrate-binding site is contributed by Asp38. IMP contacts are provided by residues 38 to 41 (DEGK), 63 to 66 (NAGH), Thr158, Arg172, Asn251, Thr266, and Arg330. His66 acts as the Proton donor in catalysis. 326–332 (VTTGRKR) serves as a coordination point for substrate. GTP contacts are provided by residues Arg332, 358–360 (KLD), and 440–443 (GVGK).

Belongs to the adenylosuccinate synthetase family. As to quaternary structure, homodimer. It depends on Mg(2+) as a cofactor.

The protein resides in the cytoplasm. The catalysed reaction is IMP + L-aspartate + GTP = N(6)-(1,2-dicarboxyethyl)-AMP + GDP + phosphate + 2 H(+). Its pathway is purine metabolism; AMP biosynthesis via de novo pathway; AMP from IMP: step 1/2. Component of the purine nucleotide cycle (PNC), which interconverts IMP and AMP to regulate the nucleotide levels in various tissues, and which contributes to glycolysis and ammoniagenesis. Catalyzes the first committed step in the biosynthesis of AMP from IMP. The protein is Adenylosuccinate synthetase isozyme 1 (adss1) of Xenopus tropicalis (Western clawed frog).